A 259-amino-acid polypeptide reads, in one-letter code: Glutamate racemase (259 aa).

Residues 7-8 (DS) and 39-40 (YG) each bind substrate. Residue Cys70 is the Proton donor/acceptor of the active site. 71–72 (NT) is a substrate binding site. Cys180 acts as the Proton donor/acceptor in catalysis. 181-182 (TH) is a binding site for substrate.

It belongs to the aspartate/glutamate racemases family.

The enzyme catalyses L-glutamate = D-glutamate. Its pathway is cell wall biogenesis; peptidoglycan biosynthesis. Functionally, provides the (R)-glutamate required for cell wall biosynthesis. This Persephonella marina (strain DSM 14350 / EX-H1) protein is Glutamate racemase.